A 1808-amino-acid polypeptide reads, in one-letter code: Tenascin (1808 aa).

Positions 1–22 (MGLPSQVLACAILGLLYQHASG) are cleaved as a signal peptide. A propeptide spanning residues 23–33 (GLIKRIIRQKR) is cleaved from the precursor. An N-linked (GlcNAc...) asparagine glycan is attached at N38. A glycan (O-linked (Xyl...) (chondroitin sulfate) serine) is linked at S72. The stretch at 118-142 (DIKDLLSRLEELEGLVSSLREQCAS) forms a coiled coil. N-linked (GlcNAc...) asparagine glycans are attached at residues N168 and N186. The EGF-like 1; incomplete domain occupies 176–188 (CVCEPGWKGPNCS). 13 consecutive EGF-like domains span residues 188–219 (SEPACPRNCLNRGLCVRGKCICEEGFTGEDCS), 219–250 (SQAACPSDCNDQGKCVDGVCVCFEGYTGPDCG), 250–281 (GEELCPHGCGIHGRCVGGRCVCHEGFTGEDCN), 281–312 (NEPLCPNNCHNRGRCVDNECVCDEGYTGEDCG), 312–343 (GELICPNDCFDRGRCINGTCFCEEGYTGEDCG), 343–374 (GELTCPNNCNGNGRCENGLCVCHEGFVGDDCS), 374–405 (SQKRCPKDCNNRGHCVDGRCVCHEGYLGEDCG), 405–436 (GELRCPNDCHNRGRCINGQCVCDEGFIGEDCG), 436–467 (GELRCPNDCHNRGRCVNGQCECHEGFIGEDCG), 467–498 (GELRCPNDCNSHGRCVNGQCVCDEGYTGEDCG), 498–529 (GELRCPNDCHNRGRCVEGRCVCDNGFMGEDCG), 529–560 (GELSCPNDCHQHGRCVDGRCVCHEGFTGEDCR), and 560–591 (RERSCPNDCNNVGRCVEGRCVCEEGYMGIDCS). Intrachain disulfides connect C192–C202, C196–C207, C209–C218, C223–C233, C227–C238, C240–C249, C254–C264, C258–C269, C271–C280, C285–C295, C289–C300, C302–C311, C316–C326, C320–C331, C333–C342, C347–C357, C351–C362, C364–C373, C378–C388, C382–C393, C395–C404, C409–C419, C413–C424, C426–C435, C440–C450, C444–C455, C457–C466, C471–C481, C475–C486, C488–C497, C502–C512, C506–C517, C519–C528, C533–C543, C537–C548, C550–C559, C564–C574, C568–C579, and C581–C590. N328 carries N-linked (GlcNAc...) asparagine glycosylation. 11 Fibronectin type-III domains span residues 595 to 685 (PPTE…LPAP), 686 to 775 (EGLK…TKLD), 776 to 866 (APSQ…DLDA), 867 to 957 (PRNL…TDLD), 958 to 1046 (NPKD…EEEP), 1047 to 1138 (ELGN…AHPE), 1139 to 1228 (VGEL…EAEP), 1229 to 1318 (EVDN…TVVG), 1319 to 1408 (SPKG…ALDS), 1409 to 1495 (PSGL…TGLD), and 1496 to 1584 (APKD…TGLL). N-linked (GlcNAc...) asparagine glycans are attached at residues N603, N643, N751, and N759. 6 N-linked (GlcNAc...) asparagine glycosylation sites follow: N1050, N1090, N1101, N1112, N1153, and N1183. N1416 carries N-linked (GlcNAc...) asparagine glycosylation. The Fibrinogen C-terminal domain occupies 1582-1797 (GLLYPYPKDC…FAEMKLRPSS (216 aa)). N-linked (GlcNAc...) asparagine glycosylation is found at N1736 and N1769.

Belongs to the tenascin family. In terms of assembly, homohexamer; disulfide-linked. A homotrimer may be formed in the triple coiled-coil region and may be stabilized by disulfide rings at both ends. Two of such half-hexabrachions may be disulfide linked within the central globule. Interacts with CSPG5. As to expression, expressed in the brain.

The protein localises to the secreted. The protein resides in the extracellular space. It localises to the extracellular matrix. Its function is as follows. Extracellular matrix protein implicated in guidance of migrating neurons as well as axons during development, synaptic plasticity as well as neuronal regeneration. Ligand for integrins alpha-8/beta-1, alpha-9/beta-1, alpha-V/beta-3 and alpha-V/beta-6. The chain is Tenascin (TNC) from Gallus gallus (Chicken).